Here is a 145-residue protein sequence, read N- to C-terminus: MNIIAELEAEQAAKLLAGKTIPEFQPGDTVIVNVKVKEGERTRVQAYEGVCIARNGGGLNESFTVRKISYGEGVERVFAIYSPNIDSIKVVRRGKVRRAKLYYLRDRRGKSARIAEKMESPAAKATREAAKKEAKAAKKNAAPAE.

Residues 114–136 show a composition bias toward basic and acidic residues; the sequence is IAEKMESPAAKATREAAKKEAKA. Residues 114–145 form a disordered region; that stretch reads IAEKMESPAAKATREAAKKEAKAAKKNAAPAE.

It belongs to the bacterial ribosomal protein bL19 family.

This protein is located at the 30S-50S ribosomal subunit interface and may play a role in the structure and function of the aminoacyl-tRNA binding site. The protein is Large ribosomal subunit protein bL19 of Methylocella silvestris (strain DSM 15510 / CIP 108128 / LMG 27833 / NCIMB 13906 / BL2).